The sequence spans 209 residues: Protein Sxy (209 aa).

The protein belongs to the Sxy/TfoX family.

In terms of biological role, induces low levels of natural DNA uptake by inducing transcription of the competence genes (the CRP-S regulon) required for DNA transformation. Induction of the CRP-S regulon also requires Sxy-activated promoter (CRP-S), cAMP receptor protein (CRP) and cAMP. Induces CRP-S site-containing genes which are involved in genome maintenance and transcription or encoding transposases and toxin-antitoxin pairs. The chain is Protein Sxy from Escherichia coli (strain K12).